Consider the following 644-residue polypeptide: SPbeta prophage-derived uncharacterized protein YomE (644 aa).

This chain is SPbeta prophage-derived uncharacterized protein YomE (yomE), found in Bacillus subtilis (strain 168).